We begin with the raw amino-acid sequence, 880 residues long: Translation initiation factor IF-2 (880 aa).

The interval 259 to 281 is disordered; the sequence is KNREEARAVGRSSKSQSKRKSST. The 170-residue stretch at 379–548 folds into the tr-type G domain; that stretch reads SRAPVVTIMG…LLQAEVLELK (170 aa). Residues 388–395 are G1; the sequence is GHVDHGKT. 388–395 provides a ligand contact to GTP; the sequence is GHVDHGKT. A G2 region spans residues 413–417; that stretch reads GITQH. The interval 434 to 437 is G3; the sequence is DTPG. GTP-binding positions include 434–438 and 488–491; these read DTPGH and NKID. Positions 488–491 are G4; that stretch reads NKID. The G5 stretch occupies residues 524 to 526; that stretch reads SAK.

This sequence belongs to the TRAFAC class translation factor GTPase superfamily. Classic translation factor GTPase family. IF-2 subfamily.

It localises to the cytoplasm. In terms of biological role, one of the essential components for the initiation of protein synthesis. Protects formylmethionyl-tRNA from spontaneous hydrolysis and promotes its binding to the 30S ribosomal subunits. Also involved in the hydrolysis of GTP during the formation of the 70S ribosomal complex. The chain is Translation initiation factor IF-2 from Baumannia cicadellinicola subsp. Homalodisca coagulata.